The sequence spans 245 residues: Small ribosomal subunit protein uS2 (245 aa).

The protein belongs to the universal ribosomal protein uS2 family.

The protein is Small ribosomal subunit protein uS2 of Pseudomonas putida (strain GB-1).